A 164-amino-acid chain; its full sequence is Peptidyl-prolyl cis-trans isomerase A-like 4C (164 aa).

The PPIase cyclophilin-type domain maps to 7 to 163; it reads FFDITVDGKP…KKITIADCGQ (157 aa).

It belongs to the cyclophilin-type PPIase family. PPIase A subfamily.

Its subcellular location is the cytoplasm. The enzyme catalyses [protein]-peptidylproline (omega=180) = [protein]-peptidylproline (omega=0). Functionally, PPIases accelerate the folding of proteins. It catalyzes the cis-trans isomerization of proline imidic peptide bonds in oligopeptides. This Homo sapiens (Human) protein is Peptidyl-prolyl cis-trans isomerase A-like 4C.